Consider the following 476-residue polypeptide: Aspartyl/glutamyl-tRNA(Asn/Gln) amidotransferase subunit B (476 aa).

This sequence belongs to the GatB/GatE family. GatB subfamily. In terms of assembly, heterotrimer of A, B and C subunits.

It catalyses the reaction L-glutamyl-tRNA(Gln) + L-glutamine + ATP + H2O = L-glutaminyl-tRNA(Gln) + L-glutamate + ADP + phosphate + H(+). The catalysed reaction is L-aspartyl-tRNA(Asn) + L-glutamine + ATP + H2O = L-asparaginyl-tRNA(Asn) + L-glutamate + ADP + phosphate + 2 H(+). In terms of biological role, allows the formation of correctly charged Asn-tRNA(Asn) or Gln-tRNA(Gln) through the transamidation of misacylated Asp-tRNA(Asn) or Glu-tRNA(Gln) in organisms which lack either or both of asparaginyl-tRNA or glutaminyl-tRNA synthetases. The reaction takes place in the presence of glutamine and ATP through an activated phospho-Asp-tRNA(Asn) or phospho-Glu-tRNA(Gln). This Lactobacillus gasseri (strain ATCC 33323 / DSM 20243 / BCRC 14619 / CIP 102991 / JCM 1131 / KCTC 3163 / NCIMB 11718 / NCTC 13722 / AM63) protein is Aspartyl/glutamyl-tRNA(Asn/Gln) amidotransferase subunit B.